A 199-amino-acid chain; its full sequence is Holliday junction branch migration complex subunit RuvA (199 aa).

Residues 1–64 (MIAFLKGAVF…ENEFKLFGFL (64 aa)) form a domain I region. Residues 65 to 143 (DQDELRLFKT…ELKLVEVEKE (79 aa)) are domain II. Residues 144–148 (QRPLL) form a flexible linker region. The tract at residues 148 to 199 (LDELMEALEILGYSRSEVLPAIMDLNRNKQLGNIVEENIKLVLKAKAQEMRR) is domain III.

The protein belongs to the RuvA family. In terms of assembly, homotetramer. Forms an RuvA(8)-RuvB(12)-Holliday junction (HJ) complex. HJ DNA is sandwiched between 2 RuvA tetramers; dsDNA enters through RuvA and exits via RuvB. An RuvB hexamer assembles on each DNA strand where it exits the tetramer. Each RuvB hexamer is contacted by two RuvA subunits (via domain III) on 2 adjacent RuvB subunits; this complex drives branch migration. In the full resolvosome a probable DNA-RuvA(4)-RuvB(12)-RuvC(2) complex forms which resolves the HJ.

The protein resides in the cytoplasm. Its function is as follows. The RuvA-RuvB-RuvC complex processes Holliday junction (HJ) DNA during genetic recombination and DNA repair, while the RuvA-RuvB complex plays an important role in the rescue of blocked DNA replication forks via replication fork reversal (RFR). RuvA specifically binds to HJ cruciform DNA, conferring on it an open structure. The RuvB hexamer acts as an ATP-dependent pump, pulling dsDNA into and through the RuvAB complex. HJ branch migration allows RuvC to scan DNA until it finds its consensus sequence, where it cleaves and resolves the cruciform DNA. This is Holliday junction branch migration complex subunit RuvA from Syntrophomonas wolfei subsp. wolfei (strain DSM 2245B / Goettingen).